Here is a 205-residue protein sequence, read N- to C-terminus: MAARDATSGSLSEESSALDLPSACDIRDYVLQGPSQEANSEAFSSLEFHSFPYSSDVDPDTSNLNIEQNNSWTAENFWLDPAVKGQSEKEEDDGLRKSLDRFYEMFGHPQPGSANSLSASVCKCLSQKITQLRGQESQKYALRSFQMARVIFNRDGCSVLQRHSRDTHFYPLEEGSTSLDDEKPNPGLSKDITHFLLQQNVMKDL.

Component of the shieldin complex, consisting of SHLD1, SHLD2, SHLD3 and MAD2L2/REV7. Within the complex, SHLD2 forms a scaffold which interacts with a SHLD3-MAD2L2 subcomplex via its N-terminus, and with SHLD1 via its C-terminus. Interacts with ASTE1.

It localises to the chromosome. Component of the shieldin complex, which plays an important role in repair of DNA double-stranded breaks (DSBs). During G1 and S phase of the cell cycle, the complex functions downstream of TP53BP1 to promote non-homologous end joining (NHEJ) and suppress DNA end resection. Mediates various NHEJ-dependent processes including immunoglobulin class-switch recombination, and fusion of unprotected telomeres. In Homo sapiens (Human), this protein is Shieldin complex subunit 1.